We begin with the raw amino-acid sequence, 97 residues long: Plastocyanin (97 aa).

The region spanning 1–97 (AEVKLGADDG…AGMKGEVTVT (97 aa)) is the Plastocyanin-like domain. Cu cation is bound by residues histidine 37, cysteine 82, histidine 85, and methionine 90.

The protein belongs to the plastocyanin family. Cu(2+) is required as a cofactor.

It localises to the plastid. The protein localises to the chloroplast thylakoid membrane. Participates in electron transfer between P700 and the cytochrome b6-f complex in photosystem I. This chain is Plastocyanin (PETE), found in Daucus carota (Wild carrot).